The sequence spans 180 residues: Ribulose bisphosphate carboxylase small subunit, chloroplastic 1 (180 aa).

A chloroplast-targeting transit peptide spans 1-56 (MASSVLSSAAVATRSNVAQANMVAPFTGLKSAASFPVSRKQNLDITSIASNGGRVQ).

Belongs to the RuBisCO small chain family. In terms of assembly, heterohexadecamer of 8 large and 8 small subunits.

The protein resides in the plastid. It is found in the chloroplast. In terms of biological role, ruBisCO catalyzes two reactions: the carboxylation of D-ribulose 1,5-bisphosphate, the primary event in carbon dioxide fixation, as well as the oxidative fragmentation of the pentose substrate. Both reactions occur simultaneously and in competition at the same active site. Although the small subunit is not catalytic it is essential for maximal activity. This chain is Ribulose bisphosphate carboxylase small subunit, chloroplastic 1, found in Nicotiana sylvestris (Wood tobacco).